Reading from the N-terminus, the 148-residue chain is Gag-Pol polyprotein (148 aa).

Residues 1–64 (IPYNPQSQGV…SAGERIIDII (64 aa)) form the Integrase catalytic domain. Glu-12 is a binding site for Mg(2+). The integrase-type DNA-binding region spans 83 to 130 (FRVYYRDSRDPIWKGPAKLLWKGEGAVVIQDNSDIKVVPRRKVKIIRD).

As to quaternary structure, homotetramer; may further associate as a homohexadecamer. Part of the pre-integration complex (PIC) which is composed of viral genome, matrix protein, Vpr and integrase. Interacts with human SMARCB1/INI1 and human PSIP1/LEDGF isoform 1. Interacts with human KPNA3; this interaction might play a role in nuclear import of the pre-integration complex. Interacts with human NUP153; this interaction might play a role in nuclear import of the pre-integration complex. Post-translationally, specific enzymatic cleavages by the viral protease yield mature proteins.

In terms of biological role, catalyzes viral DNA integration into the host chromosome, by performing a series of DNA cutting and joining reactions. This enzyme activity takes place after virion entry into a cell and reverse transcription of the RNA genome in dsDNA. The first step in the integration process is 3' processing. This step requires a complex comprising the viral genome, matrix protein, Vpr and integrase. This complex is called the pre-integration complex (PIC). The integrase protein removes 2 nucleotides from each 3' end of the viral DNA, leaving recessed CA OH's at the 3' ends. In the second step, the PIC enters cell nucleus. This process is mediated through integrase and Vpr proteins, and allows the virus to infect a non dividing cell. This ability to enter the nucleus is specific of lentiviruses, other retroviruses cannot and rely on cell division to access cell chromosomes. In the third step, termed strand transfer, the integrase protein joins the previously processed 3' ends to the 5' ends of strands of target cellular DNA at the site of integration. The 5'-ends are produced by integrase-catalyzed staggered cuts, 5 bp apart. A Y-shaped, gapped, recombination intermediate results, with the 5'-ends of the viral DNA strands and the 3' ends of target DNA strands remaining unjoined, flanking a gap of 5 bp. The last step is viral DNA integration into host chromosome. This involves host DNA repair synthesis in which the 5 bp gaps between the unjoined strands are filled in and then ligated. Since this process occurs at both cuts flanking the HIV genome, a 5 bp duplication of host DNA is produced at the ends of HIV-1 integration. Alternatively, Integrase may catalyze the excision of viral DNA just after strand transfer, this is termed disintegration. The protein is Gag-Pol polyprotein (gag-pol) of Homo sapiens (Human).